The following is a 459-amino-acid chain: Argininosuccinate lyase (459 aa).

Belongs to the lyase 1 family. Argininosuccinate lyase subfamily.

It localises to the cytoplasm. The catalysed reaction is 2-(N(omega)-L-arginino)succinate = fumarate + L-arginine. The protein operates within amino-acid biosynthesis; L-arginine biosynthesis; L-arginine from L-ornithine and carbamoyl phosphate: step 3/3. This chain is Argininosuccinate lyase, found in Buchnera aphidicola subsp. Schizaphis graminum (strain Sg).